The chain runs to 282 residues: Sulfur carrier protein FdhD (282 aa).

Cysteine 115 (cysteine persulfide intermediate) is an active-site residue.

Belongs to the FdhD family.

The protein resides in the cytoplasm. Its function is as follows. Required for formate dehydrogenase (FDH) activity. Acts as a sulfur carrier protein that transfers sulfur from IscS to the molybdenum cofactor prior to its insertion into FDH. In Streptomyces coelicolor (strain ATCC BAA-471 / A3(2) / M145), this protein is Sulfur carrier protein FdhD.